The chain runs to 198 residues: MICOS complex subunit Mic26 (198 aa).

A signal peptide spans 1 to 23; the sequence is MFKVIQRSVGPASLSLLTFRVYA. N-linked (GlcNAc...) asparagine glycosylation occurs at Asn63. The chain crosses the membrane as a helical span at residues 108–128; that stretch reads PGFFPRLGVIGFAGFVGLLFA.

The protein belongs to the apolipoprotein O/MICOS complex subunit Mic27 family. As to quaternary structure, component of the mitochondrial contact site and cristae organizing system (MICOS) complex, composed of at least MICOS10/MIC10, CHCHD3/MIC19, CHCHD6/MIC25, APOOL/MIC27, IMMT/MIC60, APOO/MIC23/MIC26 and MICOS13/MIC13. This complex was also known under the names MINOS or MitOS complex. The MICOS complex associates with mitochondrial outer membrane proteins SAMM50, MTX1 and MTX2 (together described as components of the mitochondrial outer membrane sorting assembly machinery (SAM) complex) and DNAJC11, mitochondrial inner membrane protein TMEM11 and with HSPA9. The MICOS and SAM complexes together with DNAJC11 are part of a large protein complex spanning both membranes termed the mitochondrial intermembrane space bridging (MIB) complex. Interacts with IMMT/MIC60. Interacts with MICOS10/MIC10 and APOOL/MIC27.

It is found in the mitochondrion inner membrane. The protein resides in the mitochondrion. It localises to the endoplasmic reticulum membrane. The protein localises to the golgi apparatus membrane. In terms of biological role, component of the MICOS complex, a large protein complex of the mitochondrial inner membrane that plays crucial roles in the maintenance of crista junctions, inner membrane architecture, and formation of contact sites to the outer membrane. Plays a crucial role in crista junction formation and mitochondrial function. Can induce cardiac lipotoxicity by enhancing mitochondrial respiration and fatty acid metabolism in cardiac myoblasts. Promotes cholesterol efflux from macrophage cells. Detected in HDL, LDL and VLDL. Secreted by a microsomal triglyceride transfer protein (MTTP)-dependent mechanism, probably as a VLDL-associated protein that is subsequently transferred to HDL. In Mus musculus (Mouse), this protein is MICOS complex subunit Mic26 (Apoo).